A 578-amino-acid chain; its full sequence is Acyl-CoA ligase AKT1 (578 aa).

ATP-binding positions include 210-218 (SSGTSGAQK), 350-355 (QCYGAT), Asp-438, Arg-457, and Lys-554. The interval 281–350 (DVEDLLSIVE…RHHPTWKTKQ (70 aa)) is SBD1. The tract at residues 351-413 (CYGATEAGTA…VSSPSLAIGY (63 aa)) is SBD2. The Peroxisomal targeting signal type 1 signature appears at 576 to 578 (SKI).

It is found in the peroxisome. Its pathway is mycotoxin biosynthesis. Acyl-CoA ligase; part of the gene clusters that mediate the biosynthesis of the host-selective toxins (HSTs) AK-toxins responsible for Japanese pear black spot disease by the Japanese pear pathotype. AK-toxins are esters of 9,10-epoxy 8-hydroxy 9-methyldecatrienoic acid (EDA). On cellular level, AK-toxins affect plasma membrane of susceptible cells and cause a sudden increase in loss of K(+) after a few minutes of toxin treatment. The acyl-CoA ligase AKT1, the hydrolase AKT2 and enoyl-CoA hydratase AKT3 are all involved in the biosynthesis of the AK-, AF- and ACT-toxin common 9,10-epoxy-8-hydroxy-9-methyl-decatrienoic acid (EDA) structural moiety. Part of the EDA biosynthesis occurs in the peroxisome since these 3 enzymes are localized in peroxisomes. The exact roles of the 3 enzymes, as well as of additional AK-toxin clusters enzymes, including AKT4, AKT6 and AKTS1, have still to be elucidated. The Cytochrome P450 monooxygenase AKT7 on the other side functions to limit production of EDA and AK-toxin, probably via the catalysis of a side reaction of EDA or its precursor. In Alternaria alternata (Alternaria rot fungus), this protein is Acyl-CoA ligase AKT1.